A 92-amino-acid polypeptide reads, in one-letter code: Probable Fe(2+)-trafficking protein (92 aa).

Belongs to the Fe(2+)-trafficking protein family.

In terms of biological role, could be a mediator in iron transactions between iron acquisition and iron-requiring processes, such as synthesis and/or repair of Fe-S clusters in biosynthetic enzymes. The polypeptide is Probable Fe(2+)-trafficking protein (Shewanella halifaxensis (strain HAW-EB4)).